The primary structure comprises 139 residues: Putative pre-16S rRNA nuclease (139 aa).

The protein belongs to the YqgF nuclease family.

It is found in the cytoplasm. Its function is as follows. Could be a nuclease involved in processing of the 5'-end of pre-16S rRNA. The polypeptide is Putative pre-16S rRNA nuclease (Streptococcus agalactiae serotype Ia (strain ATCC 27591 / A909 / CDC SS700)).